A 33-amino-acid polypeptide reads, in one-letter code: MIFQIGWAALAAIFTFSIAMVVWGRNGDGSIDI.

The chain crosses the membrane as a helical span at residues 2–22 (IFQIGWAALAAIFTFSIAMVV).

This sequence belongs to the PetN family. As to quaternary structure, the 4 large subunits of the cytochrome b6-f complex are cytochrome b6, subunit IV (17 kDa polypeptide, PetD), cytochrome f and the Rieske protein, while the 4 small subunits are PetG, PetL, PetM and PetN. The complex functions as a dimer.

The protein resides in the cellular thylakoid membrane. In terms of biological role, component of the cytochrome b6-f complex, which mediates electron transfer between photosystem II (PSII) and photosystem I (PSI), cyclic electron flow around PSI, and state transitions. The protein is Cytochrome b6-f complex subunit 8 of Prochlorococcus marinus (strain MIT 9301).